Here is a 275-residue protein sequence, read N- to C-terminus: 3-methyl-2-oxobutanoate hydroxymethyltransferase (275 aa).

Mg(2+) contacts are provided by Asp44 and Asp83. Residues Asp44 to Ser45, Asp83, and Lys113 each bind 3-methyl-2-oxobutanoate. Position 115 (Glu115) interacts with Mg(2+). Glu182 (proton acceptor) is an active-site residue.

Belongs to the PanB family. Homodecamer; pentamer of dimers. It depends on Mg(2+) as a cofactor.

Its subcellular location is the cytoplasm. The enzyme catalyses 3-methyl-2-oxobutanoate + (6R)-5,10-methylene-5,6,7,8-tetrahydrofolate + H2O = 2-dehydropantoate + (6S)-5,6,7,8-tetrahydrofolate. It functions in the pathway cofactor biosynthesis; (R)-pantothenate biosynthesis; (R)-pantoate from 3-methyl-2-oxobutanoate: step 1/2. Functionally, catalyzes the reversible reaction in which hydroxymethyl group from 5,10-methylenetetrahydrofolate is transferred onto alpha-ketoisovalerate to form ketopantoate. The polypeptide is 3-methyl-2-oxobutanoate hydroxymethyltransferase (Clostridium botulinum (strain Kyoto / Type A2)).